The sequence spans 234 residues: MTYKRVLLKLSGEALMGDKPYGIDPAIVQSIAEDVERVIANKVQLAIVVGGGNIFRGLKGSADGMDRATADYVGMLATVMNAISLQDGLERVGVETRVQTAIEMQEIAEPYIRRRAMRHLEKGRVVVFGGGCGNPFFTTDTTAALRAAEINAEVVMKATKVDGVYDRDPNKFKEAKKYSSLTYQQVLSDEIAVMDSTAIALCKDNNIPIMVFDIFKKGNISRAVAGESIGSLIS.

9-12 (KLSG) contributes to the ATP binding site. Gly51 provides a ligand contact to UMP. Gly52 and Arg56 together coordinate ATP. UMP-binding positions include Asp71 and 132-139 (CGNPFFTT). 3 residues coordinate ATP: Thr159, Tyr165, and Asp168.

Belongs to the UMP kinase family. In terms of assembly, homohexamer.

Its subcellular location is the cytoplasm. The catalysed reaction is UMP + ATP = UDP + ADP. It functions in the pathway pyrimidine metabolism; CTP biosynthesis via de novo pathway; UDP from UMP (UMPK route): step 1/1. Its activity is regulated as follows. Inhibited by UTP. Catalyzes the reversible phosphorylation of UMP to UDP. This chain is Uridylate kinase, found in Prochlorococcus marinus subsp. pastoris (strain CCMP1986 / NIES-2087 / MED4).